The sequence spans 381 residues: Cobalt-precorrin-5B C(1)-methyltransferase (381 aa).

Belongs to the CbiD family.

It carries out the reaction Co-precorrin-5B + S-adenosyl-L-methionine = Co-precorrin-6A + S-adenosyl-L-homocysteine. The protein operates within cofactor biosynthesis; adenosylcobalamin biosynthesis; cob(II)yrinate a,c-diamide from sirohydrochlorin (anaerobic route): step 6/10. In terms of biological role, catalyzes the methylation of C-1 in cobalt-precorrin-5B to form cobalt-precorrin-6A. The sequence is that of Cobalt-precorrin-5B C(1)-methyltransferase from Prochlorococcus marinus (strain NATL1A).